We begin with the raw amino-acid sequence, 540 residues long: MPIITLQYEDLESLTKADKDTIIDRVPMIGADIERIEKEAIDIEFFPDRPDLYSVEGVARAMRGFMNIETGLCQYEVTPSGVHIELDEKIKEVRPVLGCAIVKGINFTSSSIKSLMDLQEDLHWGLGRNRKKVSIGVHDMTNIEPPFKYQAVSPDFEFVPLDFTEPMTMDEVLEKHPKGVRFANILEGMEKYPLITDSEGKVLSFPPIINGTLTRVEESTTDLFIDVTGLGDAVYTALSIVVSALAERGGKIESVKVVYPDGTEKVTPDMTPRTLNVPRSDIDSLIGIKLTDDEIINELKRMRFDASVLEDGDMFEISVPTYRADILHNFDIVEDIAIGYGFDKIKSEFPKSATIGCAHPISVTRGVMREIMVSLGYSEVMPFTLTSQKVHFEWMNREETDDVTFVLHPISEDQTMVRTTILPNLIEIFSLNQHHELPQRLFEVGEVVVNSKNRLHLAAASIHAQANFTEIREVLDAVMRERDIEYEVVVSEDPAFIEGRRADILVNGEKVGMMGELYPEVIINFGLGQPIVGFEIDLTE.

Residues 270 to 347 enclose the B5 domain; that stretch reads MTPRTLNVPR…IGYGFDKIKS (78 aa). Positions 325, 331, 334, and 335 each coordinate Mg(2+).

It belongs to the phenylalanyl-tRNA synthetase beta subunit family. Type 2 subfamily. As to quaternary structure, tetramer of two alpha and two beta subunits. Mg(2+) is required as a cofactor.

The protein localises to the cytoplasm. The catalysed reaction is tRNA(Phe) + L-phenylalanine + ATP = L-phenylalanyl-tRNA(Phe) + AMP + diphosphate + H(+). The polypeptide is Phenylalanine--tRNA ligase beta subunit (Methanococcoides burtonii (strain DSM 6242 / NBRC 107633 / OCM 468 / ACE-M)).